The following is a 131-amino-acid chain: MATVPTRSGSPRQLTTKQTGDTWEVQARRWLEGKGLRFVAANVNERGGEIDLIMREGRTTVFVEVRYRRSALYGGAAASVTRSKQHKLLQTARLWLARHNGSFDTVDCRFDVVAFTGNEVEWIKDAFNDHS.

The segment at 1–20 (MATVPTRSGSPRQLTTKQTG) is disordered.

Belongs to the UPF0102 family.

In Escherichia coli O139:H28 (strain E24377A / ETEC), this protein is UPF0102 protein YraN.